A 486-amino-acid chain; its full sequence is Sensor protein PhoQ (486 aa).

At 1–16 (MKKLLRLFFPLSLRVR) the chain is on the cytoplasmic side. The chain crosses the membrane as a helical span at residues 17–37 (FLLATAAVVLVLSLAYGMVAL). The Periplasmic portion of the chain corresponds to 38 to 194 (IGYSVSFDKT…LKSSYMVWSW (157 aa)). Positions 151 and 152 each coordinate a divalent metal cation. Residues 195 to 215 (FIYVLSANLLLVIPLLWVAAW) traverse the membrane as a helical segment. The HAMP domain maps to 215-266 (WWSLRPIEALAKEVRELEEHNRELLNPATTRELTSLVRNLNRLLKSERERYD). The Cytoplasmic segment spans residues 216–486 (WSLRPIEALA…GRQHSAPKDE (271 aa)). One can recognise a Histidine kinase domain in the interval 274–480 (DLTHSLKTPL…RMEVIFGRQH (207 aa)). H277 is subject to Phosphohistidine; by autocatalysis. Position 385 (N385) interacts with Mg(2+). Residues 385–393 (NVLDNACKY), 415–420 (DDGPGI), and 434–446 (RVDT…GVGL) each bind ATP. Q442 is a binding site for Mg(2+).

Homodimer; probably dimerizes via the cytoplasmic domain. Probably interacts with MgrB in the periplasm, altering its activity and that of downstream effector PhoP.

It localises to the cell inner membrane. It catalyses the reaction ATP + protein L-histidine = ADP + protein N-phospho-L-histidine.. Acetyl-CoA acts as a non-competitive inhibitor of the PhoQ autokinase activity. Feedback inhibited by MgrB, which seems to bind PhoQ, altering its activity and that of downstream effector PhoP. Functionally, member of the two-component regulatory system PhoP/PhoQ involved in adaptation to low Mg(2+) environments and the control of acid resistance genes. In low periplasmic Mg(2+), PhoQ functions as a membrane-associated protein kinase that undergoes autophosphorylation and subsequently transfers the phosphate to PhoP, resulting in the expression of PhoP-activated genes (PAG) and repression of PhoP-repressed genes (PRG). In high periplasmic Mg(2+), acts as a protein phosphatase that dephosphorylates phospho-PhoP, resulting in the repression of PAG and may lead to expression of some PRG. PhoP-regulated transcription is redox-sensitive, being activated when the periplasm becomes more reducing (deletion of dsbA/dsbB, or treatment with dithiothreitol). MgrB acts between DsbA/DsbB and PhoP/PhoQ in this pathway; the 2 periplasmic Cys residues of MgrB are required for its action on PhoQ, which then acts on PhoP. Mediates magnesium influx to the cytosol by activation of mgtA. Promotes expression of the two-component regulatory system rstA/rstB and transcription of the hemL, mgrB, nagA, slyB, vboR and yrbL genes. The protein is Sensor protein PhoQ (phoQ) of Escherichia coli (strain K12).